We begin with the raw amino-acid sequence, 67 residues long: Pepsin B (67 aa).

A propeptide spans Met-1–Asp-43 (activation peptide).

Belongs to the peptidase A1 family.

The protein resides in the secreted. The catalysed reaction is Degradation of gelatin, little activity on hemoglobin. Specificity on B chain of insulin more restricted than that of pepsin A. Does not cleave 1-Phe-|-Val-2, 4-Gln-|-His-5 or 23-Gly-|-Phe-24.. This is Pepsin B (PGB) from Sus scrofa (Pig).